The sequence spans 154 residues: uncharacterized protein (154 aa).

Zn(2+) contacts are provided by C4, C7, C16, C19, C24, C28, H32, and C36. The segment at 4–36 (CSICNESEIKYKCPKCSFPYCSLPCWKIHQSQC) adopts an HIT-type zinc-finger fold.

This is an uncharacterized protein from Schizosaccharomyces pombe (strain 972 / ATCC 24843) (Fission yeast).